A 287-amino-acid polypeptide reads, in one-letter code: Putative esterase/lipase HI_0193 (287 aa).

One can recognise an AB hydrolase-1 domain in the interval 47-273 (PVLIFIHGLF…SGHWVHAEKP (227 aa)). Residues serine 119 and histidine 266 contribute to the active site.

Belongs to the DmpD/TodF/XylF esterase family.

The polypeptide is Putative esterase/lipase HI_0193 (Haemophilus influenzae (strain ATCC 51907 / DSM 11121 / KW20 / Rd)).